A 414-amino-acid chain; its full sequence is Putative cytochrome P450 126 (414 aa).

Position 363 (Cys363) interacts with heme.

It belongs to the cytochrome P450 family. The cofactor is heme.

The protein is Putative cytochrome P450 126 (cyp126) of Mycobacterium tuberculosis (strain CDC 1551 / Oshkosh).